The sequence spans 359 residues: Peptide chain release factor 1 (359 aa).

Glutamine 236 is subject to N5-methylglutamine.

It belongs to the prokaryotic/mitochondrial release factor family. Methylated by PrmC. Methylation increases the termination efficiency of RF1.

Its subcellular location is the cytoplasm. Its function is as follows. Peptide chain release factor 1 directs the termination of translation in response to the peptide chain termination codons UAG and UAA. The chain is Peptide chain release factor 1 from Lacticaseibacillus casei (strain BL23) (Lactobacillus casei).